The following is a 471-amino-acid chain: Arginine biosynthesis bifunctional protein ArgJ, mitochondrial (471 aa).

The transit peptide at 1–33 (MAMAGCNGFFLHQLRQPRLQLARQLGRTPSRAY) directs the protein to the mitochondrion. Threonine 201, lysine 230, threonine 241, glutamate 327, asparagine 466, and threonine 471 together coordinate substrate. Threonine 241 functions as the Nucleophile in the catalytic mechanism.

Belongs to the ArgJ family. In terms of assembly, heterodimer of an alpha and a beta chain. The alpha and beta chains are autoproteolytically processed from a single precursor protein within the mitochondrion.

Its subcellular location is the mitochondrion matrix. It catalyses the reaction N(2)-acetyl-L-ornithine + L-glutamate = N-acetyl-L-glutamate + L-ornithine. The enzyme catalyses L-glutamate + acetyl-CoA = N-acetyl-L-glutamate + CoA + H(+). The protein operates within amino-acid biosynthesis; L-arginine biosynthesis; L-ornithine and N-acetyl-L-glutamate from L-glutamate and N(2)-acetyl-L-ornithine (cyclic): step 1/1. It functions in the pathway amino-acid biosynthesis; L-arginine biosynthesis; N(2)-acetyl-L-ornithine from L-glutamate: step 1/4. Catalyzes two activities which are involved in the cyclic version of arginine biosynthesis: the synthesis of acetylglutamate from glutamate and acetyl-CoA, and of ornithine by transacetylation between acetylornithine and glutamate. In Chaetomium globosum (strain ATCC 6205 / CBS 148.51 / DSM 1962 / NBRC 6347 / NRRL 1970) (Soil fungus), this protein is Arginine biosynthesis bifunctional protein ArgJ, mitochondrial.